Here is a 470-residue protein sequence, read N- to C-terminus: L-seryl-tRNA(Sec) selenium transferase (470 aa).

The residue at position 294 (Lys-294) is an N6-(pyridoxal phosphate)lysine.

Belongs to the SelA family. Pyridoxal 5'-phosphate serves as cofactor.

Its subcellular location is the cytoplasm. It carries out the reaction L-seryl-tRNA(Sec) + selenophosphate + H(+) = L-selenocysteinyl-tRNA(Sec) + phosphate. The protein operates within aminoacyl-tRNA biosynthesis; selenocysteinyl-tRNA(Sec) biosynthesis; selenocysteinyl-tRNA(Sec) from L-seryl-tRNA(Sec) (bacterial route): step 1/1. Converts seryl-tRNA(Sec) to selenocysteinyl-tRNA(Sec) required for selenoprotein biosynthesis. In Solidesulfovibrio magneticus (strain ATCC 700980 / DSM 13731 / RS-1) (Desulfovibrio magneticus), this protein is L-seryl-tRNA(Sec) selenium transferase.